The sequence spans 509 residues: uncharacterized protein (509 aa).

The protein belongs to the MG032/MG096/MG288 family.

This is an uncharacterized protein from Mycoplasma pneumoniae (strain ATCC 29342 / M129 / Subtype 1) (Mycoplasmoides pneumoniae).